The sequence spans 631 residues: DDB1- and CUL4-associated factor 8-like protein 2 (631 aa).

Disordered regions lie at residues 1-91 and 108-163; these read MSHQ…EDFE and EEET…HEQY. The segment covering 44–54 has biased composition (polar residues); the sequence is SELSVTVTGDG. Composition is skewed to acidic residues over residues 77 to 88 and 108 to 147; these read SASEDIELESLE and EEET…EEEE. 7 WD repeats span residues 226–265, 269–310, 316–356, 364–404, 420–459, 467–507, and 511–550; these read DHVG…PVLN, GHTN…YFNN, QHRG…PASK, DKKV…KKEN, DFPT…GAQY, RNNT…IIQF, and SREG…ATEL. Positions 594–631 are disordered; it reads QDWRSGEAEFPDEESDESSSTSETSEEEVQDRVQCMPS.

This sequence belongs to the WD repeat DCAF8 family.

This chain is DDB1- and CUL4-associated factor 8-like protein 2 (DCAF8L2), found in Homo sapiens (Human).